A 266-amino-acid chain; its full sequence is Amylovoran biosynthesis glycosyltransferase AmsE (266 aa).

The protein belongs to the glycosyltransferase 2 family.

Its pathway is glycan metabolism; exopolysaccharide biosynthesis. In terms of biological role, involved in the biosynthesis of amylovoran which functions as a virulence factor. This Erwinia amylovora (Fire blight bacteria) protein is Amylovoran biosynthesis glycosyltransferase AmsE (amsE).